The primary structure comprises 547 residues: Membrane protein insertase YidC (547 aa).

The helical transmembrane segment at 8 to 28 threads the bilayer; sequence LRLILAIALSFLFIALYSYFF. Positions 37–50 are enriched in low complexity; sequence QTTKQETTNNHTAT. Positions 37-62 are disordered; sequence QTTKQETTNNHTATSPNAPNAQHFST. Over residues 51–62 the composition is skewed to polar residues; it reads SPNAPNAQHFST. Helical transmembrane passes span 325–345, 348–368, 414–434, 449–469, and 495–515; these read VIEY…LDYL, FVGN…IILY, GANP…FFAI, WILW…PLLM, and LLPL…VLYW.

This sequence belongs to the OXA1/ALB3/YidC family. Type 1 subfamily. Interacts with the Sec translocase complex via SecD. Specifically interacts with transmembrane segments of nascent integral membrane proteins during membrane integration.

The protein localises to the cell inner membrane. In terms of biological role, required for the insertion and/or proper folding and/or complex formation of integral membrane proteins into the membrane. Involved in integration of membrane proteins that insert both dependently and independently of the Sec translocase complex, as well as at least some lipoproteins. Aids folding of multispanning membrane proteins. This Helicobacter pylori (strain ATCC 700392 / 26695) (Campylobacter pylori) protein is Membrane protein insertase YidC.